A 557-amino-acid chain; its full sequence is Vacuolar protein sorting-associated protein 30 (557 aa).

2 disordered regions span residues 93–149 (DDDN…ENQQ) and 218–238 (NKEI…SEKE). Over residues 135-147 (DEEEQEATDEDEN) the composition is skewed to acidic residues. A Phosphothreonine modification is found at Thr-142. Residues 189-322 (LINRLKSEYD…QLDKLRKINI (134 aa)) adopt a coiled-coil conformation. The tract at residues 320 to 539 (INIFNATFKI…LAFSSNLLSK (220 aa)) is BARA. Residues 515 to 540 (WTTAMKFLLTNVKWLLAFSSNLLSKS) form a required for membrane-association, autophagic function during starvation and normal autophagosome morphology region.

Belongs to the beclin family. Component of the autophagy-specific VPS34 PI3-kinase complex I composed of VPS15, VPS30, VPS34, ATG14 and ATG38; and of the VPS34 PI3-kinase complex II composed of VPS15, VPS30, VPS34 and VPS38.

It localises to the endosome membrane. The protein localises to the vacuole membrane. The protein resides in the preautophagosomal structure membrane. Required for cytoplasm to vacuole transport (Cvt), autophagy, nucleophagy, and mitophagy, as a part of the autophagy-specific VPS34 PI3-kinase complex I. This complex is essential to recruit the ATG8-phosphatidylinositol conjugate and the ATG12-ATG5 conjugate to the pre-autophagosomal structure. Also involved in endosome-to-Golgi retrograde transport as part of the VPS34 PI3-kinase complex II. This second complex is required for the endosome-to-Golgi retrieval of PEP1 and KEX2, and the recruitment of VPS5 and VPS7, two components of the retromer complex, to endosomal membranes (probably through the synthesis of a specific pool of phosphatidylinositol 3-phosphate recruiting the retromer to the endosomes). Also plays a role in regulation of filamentous growth. This is Vacuolar protein sorting-associated protein 30 from Saccharomyces cerevisiae (strain ATCC 204508 / S288c) (Baker's yeast).